A 375-amino-acid chain; its full sequence is Alcohol dehydrogenase 1B (375 aa).

Ser1 carries the post-translational modification N-acetylserine. Residues Cys46, His67, Cys97, Cys100, Cys103, Cys111, and Cys174 each contribute to the Zn(2+) site. NAD(+) is bound by residues 199–204 (GLGGVG), Asp223, Lys228, 293–295 (VGV), and Arg370.

This sequence belongs to the zinc-containing alcohol dehydrogenase family. Class-I subfamily. Multimeric (with different ratios of monomers). Requires Zn(2+) as cofactor.

It is found in the cytoplasm. It carries out the reaction a primary alcohol + NAD(+) = an aldehyde + NADH + H(+). The catalysed reaction is a secondary alcohol + NAD(+) = a ketone + NADH + H(+). This is Alcohol dehydrogenase 1B from Saara hardwickii (Indian spiny-tailed lizard).